Reading from the N-terminus, the 739-residue chain is G2 and S phase-expressed protein 1 (739 aa).

Positions 1–11 (MEGGGGRDEPS) are enriched in basic and acidic residues. The segment at 1 to 20 (MEGGGGRDEPSACRAGDVNM) is disordered. Phosphoserine is present on S91. Disordered regions lie at residues 116-136 (SRNQ…GVER), 149-306 (EKEK…AIPV), and 320-639 (PGST…GDAA). Basic and acidic residues predominate over residues 149–165 (EKEKEMKKSPTSLKRET). S157 is modified (phosphoserine). Position 159 is a phosphothreonine (T159). S171, S187, S208, S247, and S262 each carry phosphoserine. Residues 181-195 (PRLLASSPALPSSGA) are compositionally biased toward low complexity. Positions 268–280 (IPAEKESHRDVLP) are enriched in basic and acidic residues. Low complexity-rich tracts occupy residues 284–294 (APGAVNVPAAG) and 330–342 (SSSG…ASSA). At S331 the chain carries Phosphoserine. Residues 360-372 (PANSSRPLSNISK) show a composition bias toward polar residues. Positions 411 to 424 (TAPPSASPTQPQTP) are enriched in low complexity. Composition is skewed to polar residues over residues 430 to 446 (WLNS…LNKT) and 455 to 470 (CLNS…TNQF). S480 is subject to Phosphoserine. The segment covering 481–522 (PDSSTPKLSRAQRPQSCTSVGRVTVHSTPVRRSSGPAPQSLL) has biased composition (polar residues). T485 carries the post-translational modification Phosphothreonine. Phosphoserine occurs at positions 496, 499, 514, 520, 523, and 528. T532 carries the phosphothreonine modification. A phosphoserine mark is found at S535 and S555. The segment covering 577–590 (EPTRESNRKTDSRL) has biased composition (basic and acidic residues). Residues S594 and S611 each carry the phosphoserine modification. T696 bears the Phosphothreonine mark. 5 positions are modified to phosphoserine: S707, S717, S718, S724, and S734.

Phosphorylated in mitosis.

Its subcellular location is the cytoplasm. It is found in the cytoskeleton. May be involved in p53-induced cell cycle arrest in G2/M phase by interfering with microtubule rearrangements that are required to enter mitosis. Overexpression delays G2/M phase progression. This Homo sapiens (Human) protein is G2 and S phase-expressed protein 1.